Here is a 376-residue protein sequence, read N- to C-terminus: Multiphosphoryl transfer protein (376 aa).

The PTS EIIA type-2 domain maps to 2-142 (FQLSVQDIHP…EELRALLMGE (141 aa)). Catalysis depends on His-62, which acts as the Tele-phosphohistidine intermediate; for EIIA activity. The residue at position 62 (His-62) is a Phosphohistidine; by HPr. The segment at 156-284 (TLDIVASDLL…LTSDDAPTDD (129 aa)) is m domain. The HPr domain occupies 285–375 (VLSAEFVVRN…DAIAAGLGEG (91 aa)). The Pros-phosphohistidine intermediate; for HPr activity role is filled by His-299. His-299 is modified (phosphohistidine; by EI).

The protein localises to the cytoplasm. Its function is as follows. The phosphoenolpyruvate-dependent sugar phosphotransferase system (sugar PTS), a major carbohydrate active transport system, catalyzes the phosphorylation of incoming sugar substrates concomitantly with their translocation across the cell membrane. The enzyme II FruAB PTS system is involved in fructose transport. This chain is Multiphosphoryl transfer protein, found in Escherichia coli O157:H7.